A 279-amino-acid polypeptide reads, in one-letter code: Probable phosphatase phospho1 (279 aa).

Residue Asp-41 is the Nucleophile of the active site. Positions 41 and 43 each coordinate Mg(2+). Catalysis depends on Asp-43, which acts as the Proton donor. Residues Asp-52 and Asp-133 each coordinate substrate. Asp-215 is a binding site for Mg(2+).

The protein belongs to the HAD-like hydrolase superfamily. PHOSPHO family. The cofactor is Mg(2+).

The protein resides in the extracellular vesicle. The catalysed reaction is phosphoethanolamine + H2O = ethanolamine + phosphate. It carries out the reaction phosphocholine + H2O = choline + phosphate. Functionally, phosphatase that has a high activity toward phosphoethanolamine (PEA) and phosphocholine (PCho). Involved in the generation of inorganic phosphate for bone mineralization. This is Probable phosphatase phospho1 (phospho1) from Danio rerio (Zebrafish).